Reading from the N-terminus, the 163-residue chain is Nucleotide-binding protein MS1759 (163 aa).

The protein belongs to the YajQ family.

Its function is as follows. Nucleotide-binding protein. The polypeptide is Nucleotide-binding protein MS1759 (Mannheimia succiniciproducens (strain KCTC 0769BP / MBEL55E)).